The primary structure comprises 134 residues: Small ribosomal subunit protein bS6 (134 aa).

The segment at 97–134 (TDVSPIKASEGREDRRSAPQREERNHDNSDEVSEESED) is disordered. The span at 105–125 (SEGREDRRSAPQREERNHDNS) shows a compositional bias: basic and acidic residues.

It belongs to the bacterial ribosomal protein bS6 family.

Binds together with bS18 to 16S ribosomal RNA. This is Small ribosomal subunit protein bS6 from Marinomonas sp. (strain MWYL1).